A 572-amino-acid polypeptide reads, in one-letter code: MGNEILKAPEGPPSDVERIKKESDYLRGTLKESMLEPLSAGISDDDNRLMKHHGSYLQDDRDLRNERQKQKLEPAYQFMLRVRMPGGVATPEQWLVMDELARKYGNGTLKLTTRETFQMHGILKWNMKKTIQSIHSAMLDTIAACGDVNRNVMCTSNPYQSEIHREVYEWSKKLSDDLLPRTRAYHEIWLDEEKVAGTPDADEVEPMYGPLYLPRKFKIGIAVPPSNDIDVFSQDLGFIAIVEDDKLIGFNVAIGGGMGMTHGDKATYPQLAKVIGFCKPEQLYDVAEKTITIQRDYGNRSVRKNARFKYTVDRLGLETVKNELENRLGWSLAEAKPYHFEHNGDRYGWVKGVKGRWHFTMFVEGGRVTDYDDYKLMTGLREIAKVHTGDIRLTANQNLIIANVTSQKKKKISELIEQFGLTDGKHYTALRRSSIACVALPTCGLAMAEAERYLPKLIDKIDEIVEENGLKNEEITIRMTGCPNGCARHALGEIGFIGKAPGKYNMYLGAAFDGSRLSKMYRENIGEEEILKELRNILPRYAKERNEGERFGDFVIRAGIVKETTDGTNFHD.

Residues cysteine 437, cysteine 443, cysteine 482, and cysteine 486 each contribute to the [4Fe-4S] cluster site. Residue cysteine 486 participates in siroheme binding.

This sequence belongs to the nitrite and sulfite reductase 4Fe-4S domain family. Alpha(8)-beta(8). The alpha component is a flavoprotein, the beta component is a hemoprotein. Siroheme serves as cofactor. Requires [4Fe-4S] cluster as cofactor.

It carries out the reaction hydrogen sulfide + 3 NADP(+) + 3 H2O = sulfite + 3 NADPH + 4 H(+). It functions in the pathway sulfur metabolism; hydrogen sulfide biosynthesis; hydrogen sulfide from sulfite (NADPH route): step 1/1. In terms of biological role, component of the sulfite reductase complex that catalyzes the 6-electron reduction of sulfite to sulfide. This is one of several activities required for the biosynthesis of L-cysteine from sulfate. This Bacillus licheniformis (strain ATCC 14580 / DSM 13 / JCM 2505 / CCUG 7422 / NBRC 12200 / NCIMB 9375 / NCTC 10341 / NRRL NRS-1264 / Gibson 46) protein is Sulfite reductase [NADPH] hemoprotein beta-component.